Reading from the N-terminus, the 271-residue chain is Formamidopyrimidine-DNA glycosylase (271 aa).

Pro2 (schiff-base intermediate with DNA) is an active-site residue. The Proton donor role is filled by Glu3. The Proton donor; for beta-elimination activity role is filled by Lys57. Residues His90, Arg109, and Lys151 each contribute to the DNA site. The segment at 236–270 (HVYGRGGKTCTQCGHMLSEIKLGQRATVFCSLCQQ) adopts an FPG-type zinc-finger fold. The active-site Proton donor; for delta-elimination activity is the Arg260.

This sequence belongs to the FPG family. Monomer. Zn(2+) serves as cofactor.

The enzyme catalyses Hydrolysis of DNA containing ring-opened 7-methylguanine residues, releasing 2,6-diamino-4-hydroxy-5-(N-methyl)formamidopyrimidine.. The catalysed reaction is 2'-deoxyribonucleotide-(2'-deoxyribose 5'-phosphate)-2'-deoxyribonucleotide-DNA = a 3'-end 2'-deoxyribonucleotide-(2,3-dehydro-2,3-deoxyribose 5'-phosphate)-DNA + a 5'-end 5'-phospho-2'-deoxyribonucleoside-DNA + H(+). In terms of biological role, involved in base excision repair of DNA damaged by oxidation or by mutagenic agents. Acts as a DNA glycosylase that recognizes and removes damaged bases. Has a preference for oxidized purines, such as 7,8-dihydro-8-oxoguanine (8-oxoG). Has AP (apurinic/apyrimidinic) lyase activity and introduces nicks in the DNA strand. Cleaves the DNA backbone by beta-delta elimination to generate a single-strand break at the site of the removed base with both 3'- and 5'-phosphates. This Shewanella pealeana (strain ATCC 700345 / ANG-SQ1) protein is Formamidopyrimidine-DNA glycosylase.